The sequence spans 415 residues: Dibenzothiophene monooxygenase (415 aa).

FMN contacts are provided by residues Y94, 127–132, 157–161, R280, 365–366, and T387; these read NASSEN, KHFSS, and IG. The interval 129-140 is lid loop; the sequence is SSENNSHILDWK.

Belongs to the DszC flavin monooxygenase family. In terms of assembly, homotetramer.

The protein resides in the cytoplasm. It catalyses the reaction dibenzothiophene + 2 FMNH2 + 2 O2 = dibenzothiophene 5,5-dioxide + 2 FMN + 2 H2O + 2 H(+). The enzyme catalyses dibenzothiophene + FMNH2 + O2 = dibenzothiophene 5-oxide + FMN + H2O + H(+). It carries out the reaction dibenzothiophene 5-oxide + FMNH2 + O2 = dibenzothiophene 5,5-dioxide + FMN + H2O + H(+). Its pathway is sulfur metabolism; dibenzothiophene degradation. Inhibited at high concentrations of FMN or FAD. Functionally, catalyzes the first step of the '4S' desulfurization pathway that removes covalently bound sulfur from dibenzothiophene (DBT) without breaking carbon-carbon bonds. Sulfur dioxygenase which converts DBT to DBT-sulfone (DBTO2 or DBT 5,5-dioxide) probably in a stepwise manner. In addition to FMNH2 can also use FAD (although FAD is less efficient). The polypeptide is Dibenzothiophene monooxygenase (Mycolicibacterium goodii (Mycobacterium goodii)).